A 255-amino-acid polypeptide reads, in one-letter code: MSKAFLPTILEQKEKEVAQLVMEDLQPLRQTYRLYDFLKSNQNKLQIISEVKKASPSMGDINLDVDIVAQAKTYEENGAAMISVLTDEVFFKGDISYLKEISTQVAIPTLAKDFIIDEKQIVRSRNAGATVILLIVAALPEARLKELYDFATSLGLEVLVETHNLPELEVAHRIGAEIIGVNNRNLMTFETDINTSLELSTHFKDKPVYISESAIFTGQDAALVAPYFNGILVGTALMTADNVAKKVKELQIDKG.

This sequence belongs to the TrpC family.

The catalysed reaction is 1-(2-carboxyphenylamino)-1-deoxy-D-ribulose 5-phosphate + H(+) = (1S,2R)-1-C-(indol-3-yl)glycerol 3-phosphate + CO2 + H2O. Its pathway is amino-acid biosynthesis; L-tryptophan biosynthesis; L-tryptophan from chorismate: step 4/5. This chain is Indole-3-glycerol phosphate synthase, found in Streptococcus thermophilus (strain CNRZ 1066).